Reading from the N-terminus, the 396-residue chain is Glideosome-associated protein 50 (396 aa).

Residues 1 to 369 (MNYCKTTFHI…PMGNKDTFVR (369 aa)) lie on the Lumenal side of the membrane. A metal cation-binding residues include H195 and H256. A helical transmembrane segment spans residues 370 to 390 (VVGTIGILIGSVIVFIGASSF). Residues 391–396 (LSKNMK) are Cytoplasmic-facing.

The protein belongs to the metallophosphoesterase superfamily. Purple acid phosphatase family. As to quaternary structure, component of the glideosome complex composed of GAP50, GAP45, MTIP and MyoA; the complex is formed during the late schizont stage and in merozoites. MyoA, MTIP and GAP45 probably form an initial complex in the cytoplasm which is then recruited to the outer face of the inner membrane complex via the interaction with GAP50. Interacts with GAP45; the interaction is independent of GAP45 phosphorylation status and can also occur independently of the formation of the glideosome complex. Interacts with human factor H isoform CFH (via sushi 6-7 domains) and isoform FHL-1 (via sushi 6-7 domains); the interaction occurs in the vector mosquito midgut at the surface of activated gametocytes; the interaction protects the parasite from alternative complement pathway-mediated elimination. A metal cation serves as cofactor. The N-terminus signal is likely to be cleaved.

Its subcellular location is the inner membrane complex. It localises to the cell membrane. The protein resides in the endoplasmic reticulum membrane. It carries out the reaction a phosphate monoester + H2O = an alcohol + phosphate. Its activity is regulated as follows. Activity is independent of metal ions. Functionally, component of the glideosome complex, an inner membrane complex structure involved in parasite gliding motility and host cell invasion. During the asexual blood stage, may play a role in the assembly and anchoring of the glideosome complex to the inner membrane complex. During the sexual stage in the vector mosquito midgut, protects gametocytes against host alternative complement pathway-mediated elimination by interacting with host complement inhibitor factor H. Has phosphatase activity towards nucleotides such as ATP, vitamins B1 and B6, phosphorylated sugars, glycerol phosphates and inositol triphosphates. However, the phosphatase activity is controversial. The chain is Glideosome-associated protein 50 from Plasmodium falciparum (isolate 3D7).